A 406-amino-acid polypeptide reads, in one-letter code: RNA exonuclease 4 (406 aa).

Polar residues predominate over residues 1 to 10; the sequence is MAPELSSNWK. Disordered regions lie at residues 1 to 108 and 156 to 181; these read MAPE…TLPS and AGLT…PTDL. 3 stretches are compositionally biased toward low complexity: residues 54–64, 72–82, and 94–108; these read SQQQQQASNPS, SQTQSQPSSQK, and SKPT…TLPS. Residues 162–173 are compositionally biased toward polar residues; it reads GHSSSSPKSNKN. In terms of domain architecture, Exonuclease spans 216–367; that stretch reads YLSIDCEMVG…EDARVAMLLF (152 aa). The segment covering 377–387 has biased composition (basic and acidic residues); it reads ENSNRYEEGQA. The tract at residues 377–406 is disordered; the sequence is ENSNRYEEGQAKKGGNGGGGGGGKKKKGKK. Over residues 388 to 398 the composition is skewed to gly residues; the sequence is KKGGNGGGGGG.

Belongs to the REXO4 family.

The protein localises to the nucleus. Functionally, exoribonuclease involved in ribosome biosynthesis. Involved in the processing of ITS1, the internal transcribed spacer localized between the 18S and 5.8S rRNAs. The sequence is that of RNA exonuclease 4 (rex-4) from Neurospora crassa (strain ATCC 24698 / 74-OR23-1A / CBS 708.71 / DSM 1257 / FGSC 987).